The sequence spans 620 residues: Translation initiation factor IF-2 (620 aa).

A tr-type G domain is found at 119-288 (ERPPIVTIMG…IILISELENL (170 aa)). The interval 128–135 (GHVDHGKT) is G1. 128-135 (GHVDHGKT) lines the GTP pocket. Residues 153–157 (GITQA) form a G2 region. The tract at residues 175-178 (DTPG) is G3. Residues 175 to 179 (DTPGH) and 229 to 232 (NKID) contribute to the GTP site. Residues 229 to 232 (NKID) are G4. Positions 265–267 (SAI) are G5.

Belongs to the TRAFAC class translation factor GTPase superfamily. Classic translation factor GTPase family. IF-2 subfamily.

It is found in the cytoplasm. In terms of biological role, one of the essential components for the initiation of protein synthesis. Protects formylmethionyl-tRNA from spontaneous hydrolysis and promotes its binding to the 30S ribosomal subunits. Also involved in the hydrolysis of GTP during the formation of the 70S ribosomal complex. The sequence is that of Translation initiation factor IF-2 from Mycoplasma mycoides subsp. mycoides SC (strain CCUG 32753 / NCTC 10114 / PG1).